The chain runs to 227 residues: MAHAAQVGLQDATSPIMEELITFHDHALMIIFLICFLVLYALFLTLTTKLTSTNISDAQEMETIWTILPAIILVLIALPSLRILYMTDEINDPSFTIKSIGHQWYWTYEYTDYGGLIFNSYMLPPLFLEPGDLRLLDVDNRVVLPVEAPVRMMITSQDVLHSWAVPTLGLKTDAIPGRLNQTTFTATRPGVYYGQCSEICGANHSFMPIVLELIPLKIFEMGPVFAL.

Residues 1–14 are Mitochondrial intermembrane-facing; the sequence is MAHAAQVGLQDATS. Residues 15–45 traverse the membrane as a helical segment; sequence PIMEELITFHDHALMIIFLICFLVLYALFLT. At 46 to 59 the chain is on the mitochondrial matrix side; it reads LTTKLTSTNISDAQ. A helical membrane pass occupies residues 60–87; that stretch reads EMETIWTILPAIILVLIALPSLRILYMT. At 88–227 the chain is on the mitochondrial intermembrane side; that stretch reads DEINDPSFTI…IFEMGPVFAL (140 aa). The Cu cation site is built by His-161, Cys-196, Glu-198, Cys-200, His-204, and Met-207. Glu-198 serves as a coordination point for Mg(2+).

Belongs to the cytochrome c oxidase subunit 2 family. In terms of assembly, component of the cytochrome c oxidase (complex IV, CIV), a multisubunit enzyme composed of 14 subunits. The complex is composed of a catalytic core of 3 subunits MT-CO1, MT-CO2 and MT-CO3, encoded in the mitochondrial DNA, and 11 supernumerary subunits COX4I, COX5A, COX5B, COX6A, COX6B, COX6C, COX7A, COX7B, COX7C, COX8 and NDUFA4, which are encoded in the nuclear genome. The complex exists as a monomer or a dimer and forms supercomplexes (SCs) in the inner mitochondrial membrane with NADH-ubiquinone oxidoreductase (complex I, CI) and ubiquinol-cytochrome c oxidoreductase (cytochrome b-c1 complex, complex III, CIII), resulting in different assemblies (supercomplex SCI(1)III(2)IV(1) and megacomplex MCI(2)III(2)IV(2)). Found in a complex with TMEM177, COA6, COX18, COX20, SCO1 and SCO2. Interacts with TMEM177 in a COX20-dependent manner. Interacts with COX20. Interacts with COX16. It depends on Cu cation as a cofactor.

It localises to the mitochondrion inner membrane. It catalyses the reaction 4 Fe(II)-[cytochrome c] + O2 + 8 H(+)(in) = 4 Fe(III)-[cytochrome c] + 2 H2O + 4 H(+)(out). In terms of biological role, component of the cytochrome c oxidase, the last enzyme in the mitochondrial electron transport chain which drives oxidative phosphorylation. The respiratory chain contains 3 multisubunit complexes succinate dehydrogenase (complex II, CII), ubiquinol-cytochrome c oxidoreductase (cytochrome b-c1 complex, complex III, CIII) and cytochrome c oxidase (complex IV, CIV), that cooperate to transfer electrons derived from NADH and succinate to molecular oxygen, creating an electrochemical gradient over the inner membrane that drives transmembrane transport and the ATP synthase. Cytochrome c oxidase is the component of the respiratory chain that catalyzes the reduction of oxygen to water. Electrons originating from reduced cytochrome c in the intermembrane space (IMS) are transferred via the dinuclear copper A center (CU(A)) of subunit 2 and heme A of subunit 1 to the active site in subunit 1, a binuclear center (BNC) formed by heme A3 and copper B (CU(B)). The BNC reduces molecular oxygen to 2 water molecules using 4 electrons from cytochrome c in the IMS and 4 protons from the mitochondrial matrix. This chain is Cytochrome c oxidase subunit 2 (MT-CO2), found in Gorilla gorilla gorilla (Western lowland gorilla).